We begin with the raw amino-acid sequence, 180 residues long: F17 fimbrial protein (180 aa).

The N-terminal stretch at Met-1–Ala-21 is a signal peptide. A disulfide bond links Cys-37 and Cys-77.

This sequence belongs to the fimbrial protein family.

The protein resides in the fimbrium. In terms of biological role, fimbriae (also called pili), polar filaments radiating from the surface of the bacterium to a length of 0.5-1.5 micrometers and numbering 100-300 per cell, enable bacteria to colonize the epithelium of specific host organs. This chain is F17 fimbrial protein (F17a-A), found in Escherichia coli.